We begin with the raw amino-acid sequence, 142 residues long: Small ribosomal subunit protein bS18c (142 aa).

The interval Met-1–Pro-21 is disordered.

Belongs to the bacterial ribosomal protein bS18 family. As to quaternary structure, part of the 30S ribosomal subunit.

The protein resides in the plastid. This Cuscuta gronovii (Common dodder) protein is Small ribosomal subunit protein bS18c.